The chain runs to 508 residues: Hydroxymethylglutaryl-CoA synthase, mitochondrial (508 aa).

A mitochondrion-targeting transit peptide spans 1-37 (MQRLLTPVKRILQLTRAVQETSLTPARLLPVAHQRFS). Lysine 52 carries the post-translational modification N6-succinyllysine. (3S)-3-hydroxy-3-methylglutaryl-CoA is bound by residues glutamate 80 and alanine 81. Lysine 83 bears the N6-acetyllysine; alternate mark. Lysine 83 bears the N6-succinyllysine; alternate mark. The Proton donor/acceptor role is filled by glutamate 132. Positions 166, 204, and 208 each coordinate (3S)-3-hydroxy-3-methylglutaryl-CoA. Residue cysteine 166 is the Acyl-thioester intermediate of the active site. Lysine 221 carries the post-translational modification N6-succinyllysine. Lysine 243 is subject to N6-acetyllysine. Lysine 256 is subject to N6-acetyllysine; alternate. Lysine 256 is modified (N6-succinyllysine; alternate). Residues serine 258 and histidine 301 each contribute to the (3S)-3-hydroxy-3-methylglutaryl-CoA site. The active-site Proton donor/acceptor is the histidine 301. Lysine 306 is subject to N6-acetyllysine. Lysine 310 contacts (3S)-3-hydroxy-3-methylglutaryl-CoA. Lysine 310 carries the post-translational modification N6-acetyllysine; alternate. N6-succinyllysine; alternate is present on lysine 310. Residue lysine 333 is modified to N6-succinyllysine. An N6-acetyllysine; alternate mark is found at lysine 342, lysine 350, lysine 354, and lysine 358. An N6-succinyllysine; alternate mark is found at lysine 342, lysine 350, lysine 354, and lysine 358. 2 residues coordinate (3S)-3-hydroxy-3-methylglutaryl-CoA: asparagine 380 and serine 414. Serine 433 is modified (phosphoserine). N6-acetyllysine is present on lysine 437. Serine 440 is modified (phosphoserine). An N6-acetyllysine; alternate modification is found at lysine 447. Lysine 447 carries the post-translational modification N6-succinyllysine; alternate. Serine 456 is subject to Phosphoserine. Position 473 is an N6-acetyllysine; alternate (lysine 473). At lysine 473 the chain carries N6-succinyllysine; alternate. A Phosphoserine modification is found at serine 477.

The protein belongs to the thiolase-like superfamily. HMG-CoA synthase family. As to quaternary structure, homodimer. In terms of processing, succinylated. Desuccinylated by SIRT5. Succinylation, at least at Lys-83 and Lys-310, inhibits the enzymatic activity. Expression in liver is 200-fold higher than in any other tissue. Low expression in colon, kidney, testis, and pancreas. Very low expression in heart and skeletal muscle. Not detected in brain. In terms of tissue distribution, highest expression detected in heart and skeletal muscle.

The protein resides in the mitochondrion. The catalysed reaction is acetoacetyl-CoA + acetyl-CoA + H2O = (3S)-3-hydroxy-3-methylglutaryl-CoA + CoA + H(+). It functions in the pathway metabolic intermediate biosynthesis; (R)-mevalonate biosynthesis; (R)-mevalonate from acetyl-CoA: step 2/3. In terms of biological role, catalyzes the first irreversible step in ketogenesis, condensing acetyl-CoA to acetoacetyl-CoA to form HMG-CoA, which is converted by HMG-CoA reductase (HMGCR) into mevalonate. This chain is Hydroxymethylglutaryl-CoA synthase, mitochondrial (HMGCS2), found in Homo sapiens (Human).